Reading from the N-terminus, the 215-residue chain is ER lumen protein-retaining receptor 3 (215 aa).

The Lumenal segment spans residues 1-4 (MNIF). A helical transmembrane segment spans residues 5-24 (RLSGDVCHLIAIIILFLKIW). The Cytoplasmic segment spans residues 25-32 (RSKSCAGI). A helical membrane pass occupies residues 33 to 52 (SGKSQVLFALVFTTRYLDLF). Residues 47-48 (RY) form an interaction with the K-D-E-L motif on target proteins region. The Lumenal segment spans residues 53–58 (TSYISA). A helical membrane pass occupies residues 59 to 79 (YNTVMKVVYLLLAYSTVGLIF). The Cytoplasmic segment spans residues 80–92 (FRFRNSYDSESDS). Residues 93–110 (FRVEFLLVPVAGLSFLEN) traverse the membrane as a helical segment. The Lumenal portion of the chain corresponds to 111–116 (YAFTPL). Residues 117–135 (EILWTFSIYLESVAILPQL) traverse the membrane as a helical segment. The Cytoplasmic segment spans residues 136-149 (FMITKTGEAESITA). The helical transmembrane segment at 150–168 (HYLLFLGLYRALYLANWLW) threads the bilayer. Positions 159–169 (RALYLANWLWR) are interaction with the K-D-E-L motif on target proteins. At 169–178 (RFHTEGFYDQ) the chain is on the lumenal side. Residues 179 to 199 (IAVVSGVVQTIFYCDFFYLYF) traverse the membrane as a helical segment. Topologically, residues 200–215 (TRVLRGSGKMSLPMPV) are cytoplasmic. The interval 204–208 (RGSGK) is important for recycling of cargo proteins with the sequence motif K-D-E-L from the Golgi to the endoplasmic reticulum.

This sequence belongs to the ERD2 family.

The protein resides in the endoplasmic reticulum membrane. It localises to the golgi apparatus membrane. It is found in the cytoplasmic vesicle. Its subcellular location is the COPI-coated vesicle membrane. In terms of biological role, receptor for the C-terminal sequence motif K-D-E-L that is present on endoplasmic reticulum resident proteins and that mediates their recycling from the Golgi back to the endoplasmic reticulum. The sequence is that of ER lumen protein-retaining receptor 3 (kdelr3) from Danio rerio (Zebrafish).